Consider the following 119-residue polypeptide: UPF0102 protein FN1370 (119 aa).

This sequence belongs to the UPF0102 family.

The chain is UPF0102 protein FN1370 from Fusobacterium nucleatum subsp. nucleatum (strain ATCC 25586 / DSM 15643 / BCRC 10681 / CIP 101130 / JCM 8532 / KCTC 2640 / LMG 13131 / VPI 4355).